The following is a 598-amino-acid chain: Thiol:disulfide interchange protein DsbD (598 aa).

The signal sequence occupies residues 1–19 (MAYRIITLILLLCSTSATA). Residues cysteine 122 and cysteine 128 are joined by a disulfide bond. The disordered stretch occupies residues 147–187 (DGQATAIEPMPSTSSRPAFNPPLPVEPRPAPELATSPAPAA). A compositionally biased stretch (pro residues) spans 165-176 (FNPPLPVEPRPA). A run of 7 helical transmembrane segments spans residues 197–217 (LPFTALWALLIGIGIAFTPCV), 242–262 (LLAFIYVQGMALTYTALGLVV), 277–297 (YVLVGLSAVFILLALSMFGLF), 330–350 (IAGLICSPCTTAPLSAILLYI), 356–376 (LWLGGGTLYLYALGMGLPLIL), 391–411 (WMSHVKTAFGFVILALPVFLL), and 423–443 (LWSMLGVAFFSWAFITSLGAT). A disulfide bridge connects residues cysteine 216 and cysteine 338. The 140-residue stretch at 459–598 (LVSARPLQDW…FSAHLRDWQA (140 aa)) folds into the Thioredoxin domain. Cysteine 513 and cysteine 516 are disulfide-bonded.

Belongs to the thioredoxin family. DsbD subfamily.

Its subcellular location is the cell inner membrane. The catalysed reaction is [protein]-dithiol + NAD(+) = [protein]-disulfide + NADH + H(+). It catalyses the reaction [protein]-dithiol + NADP(+) = [protein]-disulfide + NADPH + H(+). Functionally, required to facilitate the formation of correct disulfide bonds in some periplasmic proteins and for the assembly of the periplasmic c-type cytochromes. Acts by transferring electrons from cytoplasmic thioredoxin to the periplasm. This transfer involves a cascade of disulfide bond formation and reduction steps. This chain is Thiol:disulfide interchange protein DsbD, found in Klebsiella pneumoniae subsp. pneumoniae (strain ATCC 700721 / MGH 78578).